Consider the following 108-residue polypeptide: Nucleoid-associated protein ACP_0492 (108 aa).

It belongs to the YbaB/EbfC family. Homodimer.

The protein localises to the cytoplasm. It is found in the nucleoid. Functionally, binds to DNA and alters its conformation. May be involved in regulation of gene expression, nucleoid organization and DNA protection. This is Nucleoid-associated protein ACP_0492 from Acidobacterium capsulatum (strain ATCC 51196 / DSM 11244 / BCRC 80197 / JCM 7670 / NBRC 15755 / NCIMB 13165 / 161).